Here is a 465-residue protein sequence, read N- to C-terminus: MKGSVFRKKSIQDLIAATSGEKSLKRELGAFDLTLLGIGAIIGTGIFVLTGTGAVTAGPGLTISFVVAALACLFAALSYAEFASSVPVSGSVYTFTYATLGELMAFIIGWDLILEYMLAVSAVSVGWSGYFQSFLSGLGIHLPVALTAAPGAVKGTFTLFNLPAFVIVMAITYLLYLGIKESKRVNNIMVILKILVVLLFIAVAAVYVKPHNWQPFMPMGFGGVFSAAALVFFAFIGFDAVSSAAEETKNPAKDLPKGIIFSLLVCTILYVTVSAIMTGVIPFAQFAGVDHPVSLVLQSAGQNWVAGIIDIGAVLGMTTVMLVMLYGQTRVMFAMSRDGLVPGSLSKVHPKHKTPYVATWFFGTMSALLGSLVPLDELAKLVNIGTLSAFVLISVAVIVLRKKQPDLPRAFKCPGVPVIPGLAILFCLFLILNLGWVTIVRFLVWLLIGLVIYFLYSRKHSKLNQ.

Helical transmembrane passes span 35–55 (LLGI…TGAV), 57–77 (AGPG…FAAL), 103–123 (LMAF…VSAV), 133–153 (SFLS…PGAV), 159–179 (LFNL…YLGI), 188–208 (IMVI…AVYV), 216–236 (FMPM…FAFI), 258–278 (GIIF…AIMT), 305–325 (VAGI…LVML), 355–375 (PYVA…LVPL), 380–400 (KLVN…VIVL), 413–432 (CPGV…FLIL), and 437–456 (VTIV…YFLY).

The protein belongs to the amino acid-polyamine-organocation (APC) superfamily.

The protein localises to the cell membrane. Its activity is regulated as follows. Isoleucine uptake is efficiently reduced in the presence of 100-fold excess valine, leucine, alanine, threonine, serine, cysteine, asparagine, and a nonproteinaceous amino acid 4-azaleucine. Branched-chain amino acid transport system which is involved in the uptake of isoleucine, valine and probably leucine. Can also transport threonine, and is active as a minor serine permease. May be an amino acid permease of rather broad specificity, because several amino acids, albeit at 100-fold excess, are able to prevent isoleucine uptake. Probably does not transport methionine. Together with BraB and BrnQ, plays an important role in the activation of CodY, a branched-chain amino acid-responsive transcriptional regulator that controls the expression of several dozen transcription units in B.subtilis. The chain is Branched-chain amino acid permease BcaP from Bacillus subtilis (strain 168).